A 676-amino-acid chain; its full sequence is tRNA 5-methylaminomethyl-2-thiouridine biosynthesis bifunctional protein MnmC (676 aa).

The tract at residues 1-241 (MFTVTPAKIY…KRECLCGIKN (241 aa)) is tRNA (mnm(5)s(2)U34)-methyltransferase. Positions 268 to 676 (IGGGIASLFT…RKLLKGTEIK (409 aa)) are FAD-dependent cmnm(5)s(2)U34 oxidoreductase.

It in the N-terminal section; belongs to the methyltransferase superfamily. tRNA (mnm(5)s(2)U34)-methyltransferase family. This sequence in the C-terminal section; belongs to the DAO family. Requires FAD as cofactor.

The protein resides in the cytoplasm. It catalyses the reaction 5-aminomethyl-2-thiouridine(34) in tRNA + S-adenosyl-L-methionine = 5-methylaminomethyl-2-thiouridine(34) in tRNA + S-adenosyl-L-homocysteine + H(+). Its function is as follows. Catalyzes the last two steps in the biosynthesis of 5-methylaminomethyl-2-thiouridine (mnm(5)s(2)U) at the wobble position (U34) in tRNA. Catalyzes the FAD-dependent demodification of cmnm(5)s(2)U34 to nm(5)s(2)U34, followed by the transfer of a methyl group from S-adenosyl-L-methionine to nm(5)s(2)U34, to form mnm(5)s(2)U34. The sequence is that of tRNA 5-methylaminomethyl-2-thiouridine biosynthesis bifunctional protein MnmC from Histophilus somni (strain 2336) (Haemophilus somnus).